The sequence spans 148 residues: Nucleoside diphosphate kinase A (148 aa).

Positions 9, 57, 85, 91, 102, and 112 each coordinate ATP. Residue His-115 is the Pros-phosphohistidine intermediate of the active site.

Belongs to the NDK family. Mg(2+) is required as a cofactor.

The enzyme catalyses a 2'-deoxyribonucleoside 5'-diphosphate + ATP = a 2'-deoxyribonucleoside 5'-triphosphate + ADP. It carries out the reaction a ribonucleoside 5'-diphosphate + ATP = a ribonucleoside 5'-triphosphate + ADP. Functionally, major role in the synthesis of nucleoside triphosphates other than ATP. The ATP gamma phosphate is transferred to the NDP beta phosphate via a ping-pong mechanism, using a phosphorylated active-site intermediate. In Flaveria bidentis (Coastal plain yellowtops), this protein is Nucleoside diphosphate kinase A.